A 373-amino-acid polypeptide reads, in one-letter code: Transcription factor NF-E2 45 kDa subunit (373 aa).

The interval 1-83 is required for interaction with MAPK8; it reads MSPCPPQQSR…SGFPLPPPPY (83 aa). A transactivation domain region spans residues 1–206; it reads MSPCPPQQSR…PAAETPLALE (206 aa). Short sequence motifs (PXY motif) lie at residues 61-65 and 79-83; these read PPTTY and PPPPY. The tract at residues 127-150 is disordered; the sequence is LDIGLPAGPPKPQEDPESDSGLSL. S157 carries the post-translational modification Phosphoserine; by MAPK8. Residue S170 is modified to Phosphoserine; by PKA. Positions 205–226 are disordered; that stretch reads LEPSSGPVRAKPTARGEAGSRD. A bZIP domain is found at 266–329; the sequence is LVRDIRRRGK…EVMRQQLTEL (64 aa). The interval 268 to 287 is basic motif; the sequence is RDIRRRGKNKVAAQNCRKRK. The tract at residues 291-298 is leucine-zipper; it reads IVQLEREL. Residue K368 forms a Glycyl lysine isopeptide (Lys-Gly) (interchain with G-Cter in SUMO1) linkage.

This sequence belongs to the bZIP family. CNC subfamily. Homodimer; can bind DNA as a homodimer. Erythroid transcription activator nuclear factor erythroid-derived 2 (NF-E2), composed of a heterodimer of NFE2 and MAFK, possesses transactivation activity on beta-globin. Also forms high affinity heterodimer with MAFG; the interaction promotes erythropoiesis. Interacts (via the PXY motif 1) with ITCH (via the WW 1 domain); the interaction promotes 'Lys63'-linked ubiquitination of NFE2, translocates it to the cytoplasm and inhibits its transactivation activity. Interacts with KMT2D/MLL2; the interaction promotes transactivation of the beta-globin locus. Interacts with MAPK8 (phosphorylated form); the interaction leads to phosphorylation of NFE2 in undifferentiated cells. Phosphorylated on serine residues. In undifferentiated erythrocytes, phosphorylated by MAPK8 which then leads to ubiquitination and protein degradation. Post-translationally, sumoylated. Sumoylation is required for translocation to nuclear bodies PODs, anchoring to the gene loci, and transactivation of the beta-globin gene. In terms of processing, ubiquitinated mainly by 'Lys63'-linked ubiquitin. Polyubiquitination with 'Lys63'-linked ubiquitin by ITCH retains NFE2 in the cytoplasm preventing its transactivation activity. In undifferentiated erythrocyte, ubiquitinated after MAPK8-mediatd phosphorylation leading to protein degradation. Expressed in hematopoietic cells and also in colon and testis.

It is found in the nucleus. The protein localises to the PML body. The protein resides in the cytoplasm. In terms of biological role, component of the NF-E2 complex essential for regulating erythroid and megakaryocytic maturation and differentiation. Binds to the hypersensitive site 2 (HS2) of the beta-globin control region (LCR). This subunit (NFE2) recognizes the TCAT/C sequence of the AP-1-like core palindrome present in a number of erythroid and megakaryocytic gene promoters. Requires MAFK or other small MAF proteins for binding to the NF-E2 motif. May play a role in all aspects of hemoglobin production from globin and heme synthesis to procurement of iron. In Homo sapiens (Human), this protein is Transcription factor NF-E2 45 kDa subunit (NFE2).